Here is a 439-residue protein sequence, read N- to C-terminus: UDP-N-acetylglucosamine--N-acetylmuramyl-(pentapeptide) pyrophosphoryl-undecaprenol N-acetylglucosamine transferase (439 aa).

Residues 25-27 (TGG), Arg218, Ser248, and Gln362 each bind UDP-N-acetyl-alpha-D-glucosamine.

It belongs to the glycosyltransferase 28 family. MurG subfamily.

The protein localises to the cell membrane. It carries out the reaction di-trans,octa-cis-undecaprenyl diphospho-N-acetyl-alpha-D-muramoyl-L-alanyl-D-glutamyl-meso-2,6-diaminopimeloyl-D-alanyl-D-alanine + UDP-N-acetyl-alpha-D-glucosamine = di-trans,octa-cis-undecaprenyl diphospho-[N-acetyl-alpha-D-glucosaminyl-(1-&gt;4)]-N-acetyl-alpha-D-muramoyl-L-alanyl-D-glutamyl-meso-2,6-diaminopimeloyl-D-alanyl-D-alanine + UDP + H(+). Its pathway is cell wall biogenesis; peptidoglycan biosynthesis. Functionally, cell wall formation. Catalyzes the transfer of a GlcNAc subunit on undecaprenyl-pyrophosphoryl-MurNAc-pentapeptide (lipid intermediate I) to form undecaprenyl-pyrophosphoryl-MurNAc-(pentapeptide)GlcNAc (lipid intermediate II). The polypeptide is UDP-N-acetylglucosamine--N-acetylmuramyl-(pentapeptide) pyrophosphoryl-undecaprenol N-acetylglucosamine transferase (Roseiflexus sp. (strain RS-1)).